The chain runs to 388 residues: Myosin light chain kinase family member 4 (388 aa).

One can recognise a Protein kinase domain in the interval 106–361 (VSKTEILGGG…ASEALKHPWL (256 aa)). ATP-binding positions include 112–120 (LGGGRFGQV) and Lys-135. Asp-227 (proton acceptor) is an active-site residue.

This sequence belongs to the protein kinase superfamily. CAMK Ser/Thr protein kinase family.

It catalyses the reaction L-seryl-[protein] + ATP = O-phospho-L-seryl-[protein] + ADP + H(+). It carries out the reaction L-threonyl-[protein] + ATP = O-phospho-L-threonyl-[protein] + ADP + H(+). The chain is Myosin light chain kinase family member 4 (MYLK4) from Homo sapiens (Human).